Here is a 509-residue protein sequence, read N- to C-terminus: MNEKQKLESGQVHPSDKKSEKDYSKYFEAVYIPPSLKDAKKRGKEAVTYHNDFKISEQFKGLGDGRKFYIRTYGCQMNEHDTEVMAGIFMALGYEATNSVDDANVILLNTCAIRENAENKVFGELGHLKALKKNNPDLILGVCGCMSQEESVVNRILKKHPFVDMIFGTHNIHRLPELLSEAYLSKEMVVEVWSKEGDVIENLPKVRNGKIKGWVNIMYGCDKFCTYCIVPYTRGKERSRRPEDIIQEVRRLASEGYKEITLLGQNVNAYGKDFEDMTYGLGDLMDELRKIDIPRIRFTTSHPRDFDDRLIEVLAKGGNLLDHIHLPVQSGSSEVLKLMARKYDRERYMELVRKIKEAMPNASLTTDIIVGFPNETDEQFEETLSLYREVEFDSAYTFIYSPREGTPAAKMKDNVPMRVKKERLQRLNALVNEISAKKMKEYEGKVVEVLVEGESKNNPDILAGYTEKSKLVNFKGPKEAIGKIVRVKIQQAKTWSLDGEMVGEAIEVK.

Positions 1–21 (MNEKQKLESGQVHPSDKKSEK) are disordered. Positions 66–184 (RKFYIRTYGC…LPELLSEAYL (119 aa)) constitute an MTTase N-terminal domain. [4Fe-4S] cluster contacts are provided by Cys75, Cys111, Cys145, Cys221, Cys225, and Cys228. Residues 207–437 (RNGKIKGWVN…NALVNEISAK (231 aa)) form the Radical SAM core domain. Residues 440 to 503 (KEYEGKVVEV…TWSLDGEMVG (64 aa)) enclose the TRAM domain.

Belongs to the methylthiotransferase family. MiaB subfamily. Monomer. It depends on [4Fe-4S] cluster as a cofactor.

The protein resides in the cytoplasm. The enzyme catalyses N(6)-dimethylallyladenosine(37) in tRNA + (sulfur carrier)-SH + AH2 + 2 S-adenosyl-L-methionine = 2-methylsulfanyl-N(6)-dimethylallyladenosine(37) in tRNA + (sulfur carrier)-H + 5'-deoxyadenosine + L-methionine + A + S-adenosyl-L-homocysteine + 2 H(+). It catalyses the reaction N(6)-dimethylallyladenosine(37) in tRNA + (sulfur carrier)-SH + AH2 + S-adenosyl-L-methionine = 2-thio-N(6)-dimethylallyladenosine(37) in tRNA + (sulfur carrier)-H + 5'-deoxyadenosine + L-methionine + A + H(+). It carries out the reaction 2-thio-N(6)-dimethylallyladenosine(37) in tRNA + S-adenosyl-L-methionine = 2-methylsulfanyl-N(6)-dimethylallyladenosine(37) in tRNA + S-adenosyl-L-homocysteine + H(+). Functionally, catalyzes the methylthiolation of N6-(dimethylallyl)adenosine (i(6)A), leading to the formation of 2-methylthio-N6-(dimethylallyl)adenosine (ms(2)i(6)A) at position 37 in tRNAs that read codons beginning with uridine. The protein is tRNA-2-methylthio-N(6)-dimethylallyladenosine synthase of Bacillus subtilis (strain 168).